The primary structure comprises 462 residues: Chromosomal replication initiator protein DnaA (462 aa).

Positions M1 to A84 are domain I, interacts with DnaA modulators. The interval A84 to S125 is domain II. Residues N126–A342 form a domain III, AAA+ region region. Residues G170, G172, K173, and T174 each contribute to the ATP site. The interval N343 to S462 is domain IV, binds dsDNA.

The protein belongs to the DnaA family. As to quaternary structure, oligomerizes as a right-handed, spiral filament on DNA at oriC.

The protein localises to the cytoplasm. Its function is as follows. Plays an essential role in the initiation and regulation of chromosomal replication. ATP-DnaA binds to the origin of replication (oriC) to initiate formation of the DNA replication initiation complex once per cell cycle. Binds the DnaA box (a 9 base pair repeat at the origin) and separates the double-stranded (ds)DNA. Forms a right-handed helical filament on oriC DNA; dsDNA binds to the exterior of the filament while single-stranded (ss)DNA is stabiized in the filament's interior. The ATP-DnaA-oriC complex binds and stabilizes one strand of the AT-rich DNA unwinding element (DUE), permitting loading of DNA polymerase. After initiation quickly degrades to an ADP-DnaA complex that is not apt for DNA replication. Binds acidic phospholipids. The protein is Chromosomal replication initiator protein DnaA of Shewanella baltica (strain OS195).